We begin with the raw amino-acid sequence, 338 residues long: Glycerol-3-phosphate dehydrogenase [NAD(P)+] (338 aa).

The NADPH site is built by Ser-11, Trp-12, His-32, Arg-33, and Lys-106. Lys-106, Gly-137, and Ser-139 together coordinate sn-glycerol 3-phosphate. Ala-141 is a binding site for NADPH. Positions 192, 245, 255, 256, and 257 each coordinate sn-glycerol 3-phosphate. Lys-192 serves as the catalytic Proton acceptor. Position 256 (Arg-256) interacts with NADPH. Val-280 and Glu-282 together coordinate NADPH.

It belongs to the NAD-dependent glycerol-3-phosphate dehydrogenase family.

It localises to the cytoplasm. The enzyme catalyses sn-glycerol 3-phosphate + NAD(+) = dihydroxyacetone phosphate + NADH + H(+). It carries out the reaction sn-glycerol 3-phosphate + NADP(+) = dihydroxyacetone phosphate + NADPH + H(+). It functions in the pathway membrane lipid metabolism; glycerophospholipid metabolism. In terms of biological role, catalyzes the reduction of the glycolytic intermediate dihydroxyacetone phosphate (DHAP) to sn-glycerol 3-phosphate (G3P), the key precursor for phospholipid synthesis. This Lysinibacillus sphaericus (strain C3-41) protein is Glycerol-3-phosphate dehydrogenase [NAD(P)+].